We begin with the raw amino-acid sequence, 252 residues long: L-aspartate dehydrogenase (252 aa).

NAD(+)-binding residues include Ala119 and Asn175. Residue His203 is part of the active site.

The protein belongs to the L-aspartate dehydrogenase family.

The enzyme catalyses L-aspartate + NADP(+) + H2O = oxaloacetate + NH4(+) + NADPH + H(+). It catalyses the reaction L-aspartate + NAD(+) + H2O = oxaloacetate + NH4(+) + NADH + H(+). Its pathway is cofactor biosynthesis; NAD(+) biosynthesis; iminoaspartate from L-aspartate (dehydrogenase route): step 1/1. Functionally, specifically catalyzes the NAD or NADP-dependent dehydrogenation of L-aspartate to iminoaspartate. This Methanospirillum hungatei JF-1 (strain ATCC 27890 / DSM 864 / NBRC 100397 / JF-1) protein is L-aspartate dehydrogenase.